A 283-amino-acid chain; its full sequence is Thymidylate synthase (283 aa).

Position 22 (Arg-22) interacts with dUMP. Catalysis depends on Cys-160, which acts as the Nucleophile. DUMP is bound by residues 180-183 (RSCD), Asn-191, and 221-223 (HIY). Asp-183 provides a ligand contact to (6R)-5,10-methylene-5,6,7,8-tetrahydrofolate. Residue Ser-282 coordinates (6R)-5,10-methylene-5,6,7,8-tetrahydrofolate.

It belongs to the thymidylate synthase family. Bacterial-type ThyA subfamily. In terms of assembly, homodimer.

Its subcellular location is the cytoplasm. The enzyme catalyses dUMP + (6R)-5,10-methylene-5,6,7,8-tetrahydrofolate = 7,8-dihydrofolate + dTMP. The protein operates within pyrimidine metabolism; dTTP biosynthesis. In terms of biological role, catalyzes the reductive methylation of 2'-deoxyuridine-5'-monophosphate (dUMP) to 2'-deoxythymidine-5'-monophosphate (dTMP) while utilizing 5,10-methylenetetrahydrofolate (mTHF) as the methyl donor and reductant in the reaction, yielding dihydrofolate (DHF) as a by-product. This enzymatic reaction provides an intracellular de novo source of dTMP, an essential precursor for DNA biosynthesis. The sequence is that of Thymidylate synthase from Shewanella loihica (strain ATCC BAA-1088 / PV-4).